A 289-amino-acid chain; its full sequence is Pantothenate synthetase (289 aa).

An ATP-binding site is contributed by 30–37 (MGNLHEGH). Histidine 37 functions as the Proton donor in the catalytic mechanism. Glutamine 61 serves as a coordination point for (R)-pantoate. Glutamine 61 is a beta-alanine binding site. Position 149-152 (149-152 (GEKD)) interacts with ATP. Glutamine 155 serves as a coordination point for (R)-pantoate. 186 to 189 (MSSR) contacts ATP.

It belongs to the pantothenate synthetase family. As to quaternary structure, homodimer.

It localises to the cytoplasm. The enzyme catalyses (R)-pantoate + beta-alanine + ATP = (R)-pantothenate + AMP + diphosphate + H(+). It participates in cofactor biosynthesis; (R)-pantothenate biosynthesis; (R)-pantothenate from (R)-pantoate and beta-alanine: step 1/1. Functionally, catalyzes the condensation of pantoate with beta-alanine in an ATP-dependent reaction via a pantoyl-adenylate intermediate. The sequence is that of Pantothenate synthetase from Psychromonas ingrahamii (strain DSM 17664 / CCUG 51855 / 37).